The primary structure comprises 236 residues: Small ribosomal subunit protein uS10m (236 aa).

The transit peptide at 1–24 (MMRQSIRPLRAFSSEVSWIARRTQ) directs the protein to the mitochondrion. A disordered region spans residues 29–49 (KPGDLVPNKPEPSKNEQEPRF). Basic and acidic residues predominate over residues 39 to 49 (EPSKNEQEPRF).

Belongs to the universal ribosomal protein uS10 family. Part of the mitochondrial small ribosomal subunit.

Its subcellular location is the mitochondrion. In terms of biological role, involved in mitochondrial genome encoded proteins translation. Involved in the binding of tRNA to the ribosomes. The polypeptide is Small ribosomal subunit protein uS10m (RSM10) (Gibberella zeae (strain ATCC MYA-4620 / CBS 123657 / FGSC 9075 / NRRL 31084 / PH-1) (Wheat head blight fungus)).